The chain runs to 480 residues: Glutamate--tRNA ligase (480 aa).

Residues 21–31 (PSPTGYLHVGG) carry the 'HIGH' region motif. Residues C110, C112, C137, and H139 each coordinate Zn(2+). The 'KMSKS' region motif lies at 248–252 (KLSKR). K251 is a binding site for ATP.

It belongs to the class-I aminoacyl-tRNA synthetase family. Glutamate--tRNA ligase type 1 subfamily. Monomer. Zn(2+) is required as a cofactor.

It localises to the cytoplasm. The catalysed reaction is tRNA(Glu) + L-glutamate + ATP = L-glutamyl-tRNA(Glu) + AMP + diphosphate. Its function is as follows. Catalyzes the attachment of glutamate to tRNA(Glu) in a two-step reaction: glutamate is first activated by ATP to form Glu-AMP and then transferred to the acceptor end of tRNA(Glu). The polypeptide is Glutamate--tRNA ligase (Mannheimia succiniciproducens (strain KCTC 0769BP / MBEL55E)).